The chain runs to 459 residues: Protein U54 (459 aa).

The signal sequence occupies residues 1–20 (MQPATLQWSSYVLQLRLTTA). N-linked (GlcNAc...) asparagine; by host glycosylation is found at Asn-76, Asn-100, Asn-281, Asn-321, and Asn-452.

Belongs to the herpesviridae UL82 family.

The sequence is that of Protein U54 (U54) from Homo sapiens (Human).